A 180-amino-acid chain; its full sequence is Large ribosomal subunit protein uL5 (180 aa).

Belongs to the universal ribosomal protein uL5 family. In terms of assembly, part of the 50S ribosomal subunit; part of the 5S rRNA/L5/L18/L25 subcomplex. Contacts the 5S rRNA and the P site tRNA. Forms a bridge to the 30S subunit in the 70S ribosome.

Its function is as follows. This is one of the proteins that bind and probably mediate the attachment of the 5S RNA into the large ribosomal subunit, where it forms part of the central protuberance. In the 70S ribosome it contacts protein S13 of the 30S subunit (bridge B1b), connecting the 2 subunits; this bridge is implicated in subunit movement. Contacts the P site tRNA; the 5S rRNA and some of its associated proteins might help stabilize positioning of ribosome-bound tRNAs. In Ralstonia pickettii (strain 12J), this protein is Large ribosomal subunit protein uL5.